The primary structure comprises 523 residues: GMP synthase [glutamine-hydrolyzing] (523 aa).

A Glutamine amidotransferase type-1 domain is found at 8 to 205 (KILILDFGSQ…VVGICGCECK (198 aa)). The Nucleophile role is filled by cysteine 85. Residues histidine 179 and glutamate 181 contribute to the active site. Residues 206–398 (WTAENIIERR…LGLPAEMLNR (193 aa)) enclose the GMPS ATP-PPase domain. Residue 233–239 (SGGVDSS) participates in ATP binding.

Homodimer.

It carries out the reaction XMP + L-glutamine + ATP + H2O = GMP + L-glutamate + AMP + diphosphate + 2 H(+). It functions in the pathway purine metabolism; GMP biosynthesis; GMP from XMP (L-Gln route): step 1/1. In terms of biological role, catalyzes the synthesis of GMP from XMP. In Actinobacillus pleuropneumoniae serotype 5b (strain L20), this protein is GMP synthase [glutamine-hydrolyzing].